The following is a 247-amino-acid chain: 7-carboxy-7-deazaguanine synthase (247 aa).

Substrate contacts are provided by residues 15–17 (IQG) and arginine 30. A Radical SAM core domain is found at 21-247 (LVGRRQIFVR…PQMHRALGLR (227 aa)). Residues cysteine 34, cysteine 38, and cysteine 41 each coordinate [4Fe-4S] cluster. Threonine 43 contacts Mg(2+). Position 78 (threonine 78) interacts with substrate. An S-adenosyl-L-methionine-binding site is contributed by glycine 80.

Belongs to the radical SAM superfamily. 7-carboxy-7-deazaguanine synthase family. As to quaternary structure, homodimer. The cofactor is [4Fe-4S] cluster. S-adenosyl-L-methionine serves as cofactor. Mg(2+) is required as a cofactor.

It carries out the reaction 6-carboxy-5,6,7,8-tetrahydropterin + H(+) = 7-carboxy-7-deazaguanine + NH4(+). The protein operates within purine metabolism; 7-cyano-7-deazaguanine biosynthesis. Its function is as follows. Catalyzes the complex heterocyclic radical-mediated conversion of 6-carboxy-5,6,7,8-tetrahydropterin (CPH4) to 7-carboxy-7-deazaguanine (CDG), a step common to the biosynthetic pathways of all 7-deazapurine-containing compounds. The sequence is that of 7-carboxy-7-deazaguanine synthase from Methanothermobacter thermautotrophicus (strain ATCC 29096 / DSM 1053 / JCM 10044 / NBRC 100330 / Delta H) (Methanobacterium thermoautotrophicum).